A 193-amino-acid polypeptide reads, in one-letter code: uncharacterized protein (193 aa).

This is an uncharacterized protein from Archaeoglobus fulgidus (strain ATCC 49558 / DSM 4304 / JCM 9628 / NBRC 100126 / VC-16).